Here is a 697-residue protein sequence, read N- to C-terminus: Elongation factor G (697 aa).

In terms of domain architecture, tr-type G spans 10-285; that stretch reads ERTRNIGIMA…AVVDYLPSPL (276 aa). GTP contacts are provided by residues 19–26, 83–87, and 137–140; these read AHIDAGKT, DTPGH, and NKMD.

The protein belongs to the TRAFAC class translation factor GTPase superfamily. Classic translation factor GTPase family. EF-G/EF-2 subfamily.

It localises to the cytoplasm. Its function is as follows. Catalyzes the GTP-dependent ribosomal translocation step during translation elongation. During this step, the ribosome changes from the pre-translocational (PRE) to the post-translocational (POST) state as the newly formed A-site-bound peptidyl-tRNA and P-site-bound deacylated tRNA move to the P and E sites, respectively. Catalyzes the coordinated movement of the two tRNA molecules, the mRNA and conformational changes in the ribosome. The polypeptide is Elongation factor G (Pediococcus pentosaceus (strain ATCC 25745 / CCUG 21536 / LMG 10740 / 183-1w)).